A 205-amino-acid chain; its full sequence is Thymidine kinase (205 aa).

ATP is bound by residues 9–16 (SAMNAGKT) and 88–91 (DECH). The active-site Proton acceptor is the Glu89. Residues Cys146, Cys148, Cys183, and His186 each contribute to the Zn(2+) site.

Belongs to the thymidine kinase family. As to quaternary structure, homotetramer.

It localises to the cytoplasm. It catalyses the reaction thymidine + ATP = dTMP + ADP + H(+). This Blochmanniella pennsylvanica (strain BPEN) protein is Thymidine kinase.